We begin with the raw amino-acid sequence, 121 residues long: uncharacterized protein (121 aa).

This is an uncharacterized protein from Bacillus subtilis (strain 168).